A 147-amino-acid chain; its full sequence is Probable disulfide formation protein (147 aa).

The helical transmembrane segment at 9-28 threads the bilayer; that stretch reads NYSLYFAWLTALIATLGSLY. C38 and C41 are joined by a disulfide. 2 helical membrane passes run 43–62 and 69–86; these read YQRVCIYPLTILLGIAAYRT and YALPLVVLGFLFSVYQYL. Cysteines 99 and 106 form a disulfide. The helical transmembrane segment at 115-138 threads the bilayer; the sequence is GFITLPFLGMLATLIMSFFLIMAF.

Belongs to the DsbB family. BdbC subfamily.

The protein localises to the cell inner membrane. In terms of biological role, required for disulfide bond formation in some proteins. This chain is Probable disulfide formation protein, found in Coxiella burnetii (strain CbuG_Q212) (Coxiella burnetii (strain Q212)).